Here is a 137-residue protein sequence, read N- to C-terminus: Phosphoribosyl-AMP cyclohydrolase (137 aa).

Position 84 (Asp84) interacts with Mg(2+). Cys85 serves as a coordination point for Zn(2+). Asp86 and Asp88 together coordinate Mg(2+). 2 residues coordinate Zn(2+): Cys101 and Cys108.

Belongs to the PRA-CH family. As to quaternary structure, homodimer. The cofactor is Mg(2+). It depends on Zn(2+) as a cofactor.

The protein localises to the cytoplasm. It catalyses the reaction 1-(5-phospho-beta-D-ribosyl)-5'-AMP + H2O = 1-(5-phospho-beta-D-ribosyl)-5-[(5-phospho-beta-D-ribosylamino)methylideneamino]imidazole-4-carboxamide. It functions in the pathway amino-acid biosynthesis; L-histidine biosynthesis; L-histidine from 5-phospho-alpha-D-ribose 1-diphosphate: step 3/9. In terms of biological role, catalyzes the hydrolysis of the adenine ring of phosphoribosyl-AMP. The sequence is that of Phosphoribosyl-AMP cyclohydrolase from Chlorobium limicola (strain DSM 245 / NBRC 103803 / 6330).